The primary structure comprises 554 residues: Hydroxylamine reductase (554 aa).

Residues C3, C6, C18, and C25 each contribute to the [2Fe-2S] cluster site. H252, E276, C320, C408, C436, C461, E495, and K497 together coordinate hybrid [4Fe-2O-2S] cluster. C408 is subject to Cysteine persulfide.

This sequence belongs to the HCP family. Requires [2Fe-2S] cluster as cofactor. The cofactor is hybrid [4Fe-2O-2S] cluster.

It localises to the cytoplasm. The enzyme catalyses A + NH4(+) + H2O = hydroxylamine + AH2 + H(+). Functionally, catalyzes the reduction of hydroxylamine to form NH(3) and H(2)O. The chain is Hydroxylamine reductase from Shewanella baltica (strain OS195).